The primary structure comprises 638 residues: Probable potassium transport system protein Kup (638 aa).

Helical transmembrane passes span Leu-25 to Leu-45, Val-65 to Val-85, Ala-114 to Ile-134, Pro-152 to Ile-172, Phe-184 to Val-204, Leu-226 to Leu-246, Ala-262 to Ile-282, Pro-291 to Ala-311, Ile-352 to Phe-372, Tyr-382 to Val-402, Leu-410 to Asn-430, and Val-434 to Thr-454.

It belongs to the HAK/KUP transporter (TC 2.A.72) family.

It localises to the cell inner membrane. It carries out the reaction K(+)(in) + H(+)(in) = K(+)(out) + H(+)(out). Transport of potassium into the cell. Likely operates as a K(+):H(+) symporter. This Burkholderia cenocepacia (strain HI2424) protein is Probable potassium transport system protein Kup.